The sequence spans 524 residues: MHSLDEPLDLKLSITKLRAAREKRERTLGVVRPRALHRELGLVDDSPTPGSPGSPPSGFLLNSKFPEKVEGRFSAAPLVDLSLSPPSGLDSPNGSSSLSPERQGNGDLPPVPSASDFQPLRYLDGVPSSFQFFLPLGSGGALHLPASSFLTPPKDKCLSPDLPLPKQLVCRWAKCNQLFELLQDLVDHVNDYHVKPEKDAGYCCHWEGCARHGRGFNARYKMLIHIRTHTNEKPHRCPTCSKSFSRLENLKIHNRSHTGEKPYVCPYEGCNKRYSNSSDRFKHTRTHYVDKPYYCKMPGCHKRYTDPSSLRKHIKAHGHFVSHEQQELLQLRPPPKPPLPAPDGGPYVSGAQIIIPNPAALFGGPGLPGLPLPLAPGPLDLSALACGNGGGSGGGGGMGPGLPGPVLPLNLAKNPLLPSPFGAGGLGLPVVSLLAGAAGGKAEGEKGRGSVPTRALGMEGHKTPLERTESSCSRPSPDGLPLLPGTVLDLSTGVNSAASSPEALAPGWVVIPPGSVLLKPAVVN.

The tract at residues 35–174 is interaction with CTNND1; that stretch reads ALHRELGLVD…PKQLVCRWAK (140 aa). Disordered regions lie at residues 39-62 and 84-114; these read ELGL…FLLN and SPPS…VPSA. Residues 71-137 form a transcription activation region; it reads GRFSAAPLVD…SSFQFFLPLG (67 aa). The segment covering 84-100 has biased composition (low complexity); sequence SPPSGLDSPNGSSSLSP. The segment at 148-171 is transcription repression; it reads SFLTPPKDKCLSPDLPLPKQLVCR. Residues 168-193 form a C2H2-type 1 zinc finger; the sequence is LVCRWAKCNQLFELLQDLVDHVNDYH. The C2H2-type 2; atypical zinc finger occupies 202–229; sequence YCCHWEGCARHGRGFNARYKMLIHIRTH. 3 C2H2-type zinc fingers span residues 235-257, 263-287, and 293-317; these read HRCP…NRSH, YVCP…TRTH, and YYCK…IKAH. The tract at residues 439-480 is disordered; sequence GGKAEGEKGRGSVPTRALGMEGHKTPLERTESSCSRPSPDGL. A compositionally biased stretch (basic and acidic residues) spans 459-469; sequence EGHKTPLERTE.

This sequence belongs to the GLI C2H2-type zinc-finger protein family. In terms of assembly, interacts with CTBP1 and HDAC3. Interacts with CTNNB1. Interacts with SUFU. Interacts with CTNND1. In terms of processing, C-terminus cleavage is induced by interaction with CTNND1 and enhanced by Src tyrosine kinase. As to expression, expressed at high levels in kidney and at low levels in heart, lung and placenta. Expressed in colon.

It localises to the nucleus speckle. It is found in the cytoplasm. Can act either as a transcriptional repressor or as a transcriptional activator, depending on the cell context. Acts as a repressor of the Hedgehog signaling pathway. Represses the Hedgehog-dependent expression of Wnt4. Necessary to maintain the differentiated epithelial phenotype in renal cells through the inhibition of SNAI1, which itself induces the epithelial-to-mesenchymal transition. Represses transcriptional activation mediated by CTNNB1 in the Wnt signaling pathway. May act by recruiting the corepressors CTBP1 and HDAC3. May be involved in neuron differentiation. This chain is Zinc finger protein GLIS2 (GLIS2), found in Homo sapiens (Human).